Here is a 133-residue protein sequence, read N- to C-terminus: Small ribosomal subunit protein uS8 (133 aa).

Belongs to the universal ribosomal protein uS8 family. Part of the 30S ribosomal subunit.

Its function is as follows. One of the primary rRNA binding proteins, it binds directly to 16S rRNA central domain where it helps coordinate assembly of the platform of the 30S subunit. This chain is Small ribosomal subunit protein uS8, found in Aeropyrum pernix (strain ATCC 700893 / DSM 11879 / JCM 9820 / NBRC 100138 / K1).